Reading from the N-terminus, the 64-residue chain is Disintegrin CV-11-beta (64 aa).

A Disintegrin domain is found at 1-64 (NSAHPCCDPV…SDCPRNPWKD (64 aa)). 4 disulfide bridges follow: Cys-6–Cys-29, Cys-20–Cys-26, Cys-25–Cys-50, and Cys-38–Cys-57. The Cell attachment site signature appears at 42–44 (RGD).

Belongs to the disintegrin family. Dimeric disintegrin subfamily. In terms of assembly, heterodimer with subunit alpha; disulfide-linked. Expressed by the venom gland.

Its subcellular location is the secreted. In terms of biological role, inhibits ADP-induced human platelet aggregation. Antagonist of alpha-IIb/beta-3 (ITGA2B/ITGB3). The chain is Disintegrin CV-11-beta from Cerastes vipera (Sahara sand viper).